Here is a 252-residue protein sequence, read N- to C-terminus: uncharacterized protein (252 aa).

An N-terminal signal peptide occupies residues 1–25 (MRKKKFLSRFAFGSLFLLCGTILSA). Residue Cys-26 is the site of N-palmitoyl cysteine attachment. The S-diacylglycerol cysteine moiety is linked to residue Cys-26.

The protein belongs to the MG439/MG440 family.

Its subcellular location is the cell membrane. This is an uncharacterized protein from Mycoplasma pneumoniae (strain ATCC 29342 / M129 / Subtype 1) (Mycoplasmoides pneumoniae).